A 209-amino-acid chain; its full sequence is Glycerol-3-phosphate acyltransferase (209 aa).

The next 5 membrane-spanning stretches (helical) occupy residues 7 to 27 (IELA…AIIV), 85 to 105 (AIIL…FFGF), 117 to 137 (VMFG…LFVA), 142 to 162 (ISSL…YLLA), and 166 to 183 (MAWV…FWRH).

The protein belongs to the PlsY family. Probably interacts with PlsX.

It is found in the cell inner membrane. It carries out the reaction an acyl phosphate + sn-glycerol 3-phosphate = a 1-acyl-sn-glycero-3-phosphate + phosphate. It functions in the pathway lipid metabolism; phospholipid metabolism. Functionally, catalyzes the transfer of an acyl group from acyl-phosphate (acyl-PO(4)) to glycerol-3-phosphate (G3P) to form lysophosphatidic acid (LPA). This enzyme utilizes acyl-phosphate as fatty acyl donor, but not acyl-CoA or acyl-ACP. The polypeptide is Glycerol-3-phosphate acyltransferase (Hydrogenovibrio crunogenus (strain DSM 25203 / XCL-2) (Thiomicrospira crunogena)).